The following is a 633-amino-acid chain: Pollen receptor-like kinase 3 (633 aa).

An N-terminal signal peptide occupies residues 1–19 (MTAVLFLCFLLICFSFTPS). Residues Asn-22 and Asn-37 are each glycosylated (N-linked (GlcNAc...) asparagine). A disulfide bridge links Cys-53 with Cys-62. LRR repeat units follow at residues 90–115 (LPNLRTIRLDNNLLSGPLPPFFKLPG), 117–137 (KSLLLSNNSFSGEIADDFFKE), 138–162 (TPQLKRVFLDNNRLSGKIPASLMQL), 163–186 (AGLEELHMQGNQFTGEIPPLTDGN), and 188–210 (VLKSLDLSNNDLEGEIPITISDR). Asn-123 carries an N-linked (GlcNAc...) asparagine glycan. Cys-224 and Cys-232 are oxidised to a cystine. The N-linked (GlcNAc...) asparagine glycan is linked to Asn-246. Residues 249-269 (AKAIFMVILFLLIFLFVVAII) form a helical membrane-spanning segment. Positions 294-314 (VEVRVPDSIKKPIDSSKKRSN) are enriched in basic and acidic residues. A disordered region spans residues 294–339 (VEVRVPDSIKKPIDSSKKRSNAEGSSKKGSSHNGKGAGGGPGSGMG). Residues 328–338 (KGAGGGPGSGM) are compositionally biased toward gly residues. The Protein kinase domain maps to 358–633 (KAAAEVLGNG…IVRRIERVTL (276 aa)). ATP contacts are provided by residues 364–372 (LGNGSLGSA) and Lys-386. Ser-438 carries the post-translational modification Phosphoserine. Thr-458 carries the post-translational modification Phosphothreonine. Residue Ser-535 is modified to Phosphoserine.

It belongs to the protein kinase superfamily. Ser/Thr protein kinase family. In terms of assembly, interacts in vitro with ROPGEF1 (via PRONE domain). Interacts with PRK6. Expressed in pollen and/or in flowers, but not in leaves.

Its subcellular location is the membrane. The enzyme catalyses L-seryl-[protein] + ATP = O-phospho-L-seryl-[protein] + ADP + H(+). It catalyses the reaction L-threonyl-[protein] + ATP = O-phospho-L-threonyl-[protein] + ADP + H(+). Its activity is regulated as follows. The phosphorylation activity is calcium-independent. Its function is as follows. Receptor-like kinase involved in the control of pollen germination and pollen tube polar growth. Can phosphorylate ROPGEF1 in vitro. The sequence is that of Pollen receptor-like kinase 3 from Arabidopsis thaliana (Mouse-ear cress).